The sequence spans 285 residues: Acetyl-coenzyme A carboxylase carboxyl transferase subunit beta (285 aa).

Residues 33 to 285 enclose the CoA carboxyltransferase N-terminal domain; that stretch reads MWIKCSKCGK…TLGNILRMHS (253 aa). Residues Cys-37, Cys-40, Cys-56, and Cys-59 each contribute to the Zn(2+) site. The C4-type zinc-finger motif lies at 37–59; that stretch reads CSKCGKILYKSDVDDNFKVCPKC.

This sequence belongs to the AccD/PCCB family. In terms of assembly, acetyl-CoA carboxylase is a heterohexamer composed of biotin carboxyl carrier protein (AccB), biotin carboxylase (AccC) and two subunits each of ACCase subunit alpha (AccA) and ACCase subunit beta (AccD). It depends on Zn(2+) as a cofactor.

Its subcellular location is the cytoplasm. It carries out the reaction N(6)-carboxybiotinyl-L-lysyl-[protein] + acetyl-CoA = N(6)-biotinyl-L-lysyl-[protein] + malonyl-CoA. The protein operates within lipid metabolism; malonyl-CoA biosynthesis; malonyl-CoA from acetyl-CoA: step 1/1. Component of the acetyl coenzyme A carboxylase (ACC) complex. Biotin carboxylase (BC) catalyzes the carboxylation of biotin on its carrier protein (BCCP) and then the CO(2) group is transferred by the transcarboxylase to acetyl-CoA to form malonyl-CoA. The chain is Acetyl-coenzyme A carboxylase carboxyl transferase subunit beta from Clostridium acetobutylicum (strain ATCC 824 / DSM 792 / JCM 1419 / IAM 19013 / LMG 5710 / NBRC 13948 / NRRL B-527 / VKM B-1787 / 2291 / W).